Consider the following 565-residue polypeptide: NAD-dependent malic enzyme (565 aa).

The Proton donor role is filled by Tyr-104. Arg-157 lines the NAD(+) pocket. Lys-175 functions as the Proton acceptor in the catalytic mechanism. A divalent metal cation contacts are provided by Glu-246, Asp-247, and Asp-270. The NAD(+) site is built by Asp-270 and Asn-418.

The protein belongs to the malic enzymes family. As to quaternary structure, homotetramer. It depends on Mg(2+) as a cofactor. Mn(2+) serves as cofactor.

It carries out the reaction (S)-malate + NAD(+) = pyruvate + CO2 + NADH. The catalysed reaction is oxaloacetate + H(+) = pyruvate + CO2. This chain is NAD-dependent malic enzyme, found in Sodalis glossinidius (strain morsitans).